Reading from the N-terminus, the 1273-residue chain is ABC transporter B family member 2 (1273 aa).

A signal peptide spans 1 to 30 (MYISLIFFLSNHFPPLISIPIFIFLSFSSP). A run of 7 helical transmembrane segments spans residues 66–86 (FSFA…GACI), 91–111 (VPIF…AYLF), 126–146 (FVYL…CWMH), 209–229 (FIAG…VTLS), 230–250 (IVPL…GLIA), 305–325 (GLGL…LVWF), and 345–365 (LNVV…SAFV). In terms of domain architecture, ABC transmembrane type-1 1 spans 77–366 (MTLGSVGACI…AAPDISAFVR (290 aa)). The ABC transporter 1 domain occupies 401-637 (IQFKDATFSY…PDGAYSSLLR (237 aa)). 436 to 443 (GGSGSGKS) contributes to the ATP binding site. 2 N-linked (GlcNAc...) asparagine glycosylation sites follow: asparagine 466 and asparagine 651. Residues 710-997 (GVCGTICAFI…TLALAPDLLK (288 aa)) enclose the ABC transmembrane type-1 2 domain. The next 2 membrane-spanning stretches (helical) occupy residues 711 to 731 (VCGT…ALGV) and 752 to 772 (IAIL…IEHI). Asparagine 806 carries N-linked (GlcNAc...) asparagine glycosylation. 3 helical membrane-spanning segments follow: residues 832 to 852 (ILLQ…ILNW), 934 to 954 (IAGL…GLAL), and 975 to 995 (FMVL…APDL). In terms of domain architecture, ABC transporter 2 spans 1030–1266 (IELKGVHFSY…KSGPYFKLIS (237 aa)). 1065 to 1072 (GQSGSGKS) contacts ATP. N-linked (GlcNAc...) asparagine glycans are attached at residues asparagine 1217 and asparagine 1256.

It belongs to the ABC transporter superfamily. ABCB family. Multidrug resistance exporter (TC 3.A.1.201) subfamily. Interacts with 1-naphthylphthalamic acid (NPA).

Its subcellular location is the membrane. The protein is ABC transporter B family member 2 (ABCB2) of Arabidopsis thaliana (Mouse-ear cress).